Reading from the N-terminus, the 88-residue chain is Large ribosomal subunit protein bL31B (88 aa).

The protein belongs to the bacterial ribosomal protein bL31 family. Type B subfamily. As to quaternary structure, part of the 50S ribosomal subunit.

The polypeptide is Large ribosomal subunit protein bL31B (Paraburkholderia xenovorans (strain LB400)).